The following is a 167-amino-acid chain: MKILVIQGPNLNMLGHRDPRLYGMVTLDQIHEIMQTFVKQGNLDVELEFFQTNFEGEIIDKIQESVGSDYEGIIINPGAFSHTSIAIADAIMLAGKPVIEVHLTNIQAREEFRKNSYTGAACGGVIMGFGPLGYNMALMAMVNILAEMKAFQEAQQNNPNNPINNQK.

The Proton acceptor role is filled by Tyr-22. Substrate-binding residues include Asn-76, His-82, and Asp-89. The active-site Proton donor is the His-102. Substrate-binding positions include 103–104 (LT) and Arg-113.

Belongs to the type-II 3-dehydroquinase family. In terms of assembly, homododecamer.

The enzyme catalyses 3-dehydroquinate = 3-dehydroshikimate + H2O. It participates in metabolic intermediate biosynthesis; chorismate biosynthesis; chorismate from D-erythrose 4-phosphate and phosphoenolpyruvate: step 3/7. Catalyzes a trans-dehydration via an enolate intermediate. The protein is 3-dehydroquinate dehydratase of Helicobacter pylori (strain Shi470).